A 316-amino-acid polypeptide reads, in one-letter code: Aspartate carbamoyltransferase catalytic subunit (316 aa).

The carbamoyl phosphate site is built by arginine 59 and threonine 60. Lysine 88 is a binding site for L-aspartate. The carbamoyl phosphate site is built by arginine 109, histidine 137, and glutamine 140. L-aspartate-binding residues include arginine 170 and arginine 232. Leucine 269 and proline 270 together coordinate carbamoyl phosphate.

Belongs to the aspartate/ornithine carbamoyltransferase superfamily. ATCase family. Heterooligomer of catalytic and regulatory chains.

The enzyme catalyses carbamoyl phosphate + L-aspartate = N-carbamoyl-L-aspartate + phosphate + H(+). The protein operates within pyrimidine metabolism; UMP biosynthesis via de novo pathway; (S)-dihydroorotate from bicarbonate: step 2/3. Functionally, catalyzes the condensation of carbamoyl phosphate and aspartate to form carbamoyl aspartate and inorganic phosphate, the committed step in the de novo pyrimidine nucleotide biosynthesis pathway. This chain is Aspartate carbamoyltransferase catalytic subunit, found in Methanobrevibacter smithii (strain ATCC 35061 / DSM 861 / OCM 144 / PS).